Reading from the N-terminus, the 179-residue chain is Protein GrpE (179 aa).

A compositionally biased stretch (basic and acidic residues) spans 1-14; sequence MSKKDKKEEIKEEV. Positions 1–40 are disordered; it reads MSKKDKKEEIKEEVEATEPTTEESVEEVAEETSENKELQE. Residues 15-32 are compositionally biased toward acidic residues; that stretch reads EATEPTTEESVEEVAEET.

It belongs to the GrpE family. As to quaternary structure, homodimer.

It localises to the cytoplasm. In terms of biological role, participates actively in the response to hyperosmotic and heat shock by preventing the aggregation of stress-denatured proteins, in association with DnaK and GrpE. It is the nucleotide exchange factor for DnaK and may function as a thermosensor. Unfolded proteins bind initially to DnaJ; upon interaction with the DnaJ-bound protein, DnaK hydrolyzes its bound ATP, resulting in the formation of a stable complex. GrpE releases ADP from DnaK; ATP binding to DnaK triggers the release of the substrate protein, thus completing the reaction cycle. Several rounds of ATP-dependent interactions between DnaJ, DnaK and GrpE are required for fully efficient folding. This is Protein GrpE from Streptococcus mutans serotype c (strain ATCC 700610 / UA159).